The sequence spans 388 residues: Succinate--CoA ligase [ADP-forming] subunit beta (388 aa).

The region spanning 9–244 is the ATP-grasp domain; it reads KELFARRGLP…VTQEDAREAH (236 aa). ATP is bound by residues Lys46, 53-55, Glu99, Thr102, and Glu107; that span reads GRG. Residues Asn199 and Asp213 each contribute to the Mg(2+) site. Substrate is bound by residues Asn264 and 321 to 323; that span reads GIV.

It belongs to the succinate/malate CoA ligase beta subunit family. As to quaternary structure, heterotetramer of two alpha and two beta subunits. Requires Mg(2+) as cofactor.

It catalyses the reaction succinate + ATP + CoA = succinyl-CoA + ADP + phosphate. The enzyme catalyses GTP + succinate + CoA = succinyl-CoA + GDP + phosphate. It participates in carbohydrate metabolism; tricarboxylic acid cycle; succinate from succinyl-CoA (ligase route): step 1/1. In terms of biological role, succinyl-CoA synthetase functions in the citric acid cycle (TCA), coupling the hydrolysis of succinyl-CoA to the synthesis of either ATP or GTP and thus represents the only step of substrate-level phosphorylation in the TCA. The beta subunit provides nucleotide specificity of the enzyme and binds the substrate succinate, while the binding sites for coenzyme A and phosphate are found in the alpha subunit. This is Succinate--CoA ligase [ADP-forming] subunit beta from Hamiltonella defensa subsp. Acyrthosiphon pisum (strain 5AT).